The following is a 504-amino-acid chain: Cytochrome P450 71B7 (504 aa).

The helical transmembrane segment at 1 to 21 (MSILLCFLCLLPVFLVSLSIL) threads the bilayer. Residue Lys82 forms a Glycyl lysine isopeptide (Lys-Gly) (interchain with G-Cter in ubiquitin) linkage. Heme is bound at residue Cys446.

This sequence belongs to the cytochrome P450 family. Heme is required as a cofactor. As to expression, highly expressed in rosette leaves. Also expressed in roots, leaves, flowers, and siliques.

Its subcellular location is the membrane. The sequence is that of Cytochrome P450 71B7 (CYP71B7) from Arabidopsis thaliana (Mouse-ear cress).